The sequence spans 115 residues: Parathyroid hormone (115 aa).

The N-terminal stretch at 1–25 is a signal peptide; the sequence is MMSAKNMVKVMIVMFAIFLLAKSDG. The propeptide occupies 26–31; sequence KPVRKR. Residues 51–69 are important for receptor binding; it reads RVEWLRKKLQDVHNFIALG. Residues 73 to 115 form a disordered region; that stretch reads FHRDGGSQRPRKKEDNVLIESHQKSLGEADKADVDVLSKTKSQ.

This sequence belongs to the parathyroid hormone family. As to quaternary structure, interacts with PTH1R (via N-terminal extracellular domain).

The protein resides in the secreted. Parathyroid hormone elevates calcium level by dissolving the salts in bone and preventing their renal excretion. Acts by binding to its receptor, PTH1R, activating G protein-coupled receptor signaling. Stimulates [1-14C]-2-deoxy-D-glucose (2DG) transport and glycogen synthesis in osteoblastic cells. In Equus caballus (Horse), this protein is Parathyroid hormone (PTH).